We begin with the raw amino-acid sequence, 86 residues long: Neurotoxin E1x (86 aa).

Residues 1–19 form the signal peptide; it reads MNSLLMITACLVVIGTVWA. Positions 20–84 constitute an LCN-type CS-alpha/beta domain; that stretch reads KEGYLVDVKG…TWPLPNKTCG (65 aa). Disulfide bonds link Cys-30–Cys-83, Cys-34–Cys-59, Cys-43–Cys-64, and Cys-47–Cys-66. The residue at position 83 (Cys-83) is a Cysteine amide.

It belongs to the long (4 C-C) scorpion toxin superfamily. Sodium channel inhibitor family. Beta subfamily. In terms of tissue distribution, expressed by the venom gland.

The protein resides in the secreted. Functionally, binds to sodium channels (Nav) and inhibits the inactivation of the activated channels, thereby blocking neuronal transmission. The sequence is that of Neurotoxin E1x from Centruroides sculpturatus (Arizona bark scorpion).